The following is a 102-amino-acid chain: MYAIIKHSGKQYKVSEGDLLNLDHFAAEKKSIVEITDVLAINDGSLKVGAPFVEGAKVVLEVVNEGKDKKVVIFKKRRRKDSKQKRGFRRQYTRVKVTSIVA.

The protein belongs to the bacterial ribosomal protein bL21 family. Part of the 50S ribosomal subunit. Contacts protein L20.

In terms of biological role, this protein binds to 23S rRNA in the presence of protein L20. The chain is Large ribosomal subunit protein bL21 from Campylobacter hominis (strain ATCC BAA-381 / DSM 21671 / CCUG 45161 / LMG 19568 / NCTC 13146 / CH001A).